Reading from the N-terminus, the 428-residue chain is Adenylosuccinate synthetase (428 aa).

GTP is bound by residues 12-18 and 40-42; these read GDEGKGK and GHS. The active-site Proton acceptor is the Asp-13. 2 residues coordinate Mg(2+): Asp-13 and Gly-40. Residues 13-16, 38-41, Thr-128, Arg-142, Gln-223, Thr-238, and Arg-302 contribute to the IMP site; these read DEGK and NAGH. His-41 serves as the catalytic Proton donor. Position 298–304 (298–304) interacts with substrate; it reads VTTGRPR. Residues Arg-304, 330–332, and 412–414 each bind GTP; these read KLD and GTG.

It belongs to the adenylosuccinate synthetase family. Homodimer. The cofactor is Mg(2+).

It localises to the cytoplasm. The catalysed reaction is IMP + L-aspartate + GTP = N(6)-(1,2-dicarboxyethyl)-AMP + GDP + phosphate + 2 H(+). Its pathway is purine metabolism; AMP biosynthesis via de novo pathway; AMP from IMP: step 1/2. Functionally, plays an important role in the de novo pathway of purine nucleotide biosynthesis. Catalyzes the first committed step in the biosynthesis of AMP from IMP. This is Adenylosuccinate synthetase from Bifidobacterium longum (strain NCC 2705).